The chain runs to 382 residues: MSLNIFWFLPTHGDGKYLGTTEGARAVDHGYLSQIAQAADRLGFGGVLIPTGRSCEDSWLVAASLIPVTERLKFLVALRPGIISPTVAARQAATLDRLSNGRALFNLVTGGDPDELAGDGLHLNHQERYEASVEFTRIWRKVLEGEVVDYDGKHLQVKGAKLLYPPIQQPRPPLYFGGSSDAAQDLAAEQVELYLTWGEPPAAVAEKIAQVREKAAAQGREVRFGIRLHVIVRETNEEAWAAADKLISHLDDDTIARAQASLARFDSVGQQRMAALHGGKRDKLEVAPNLWAGVGLVRGGAGTALVGDGPTVAARVKEYADLGIDTFIFSGYPHLEESYRVAELLFPHLDVQRPEQPKSGGYVSPFGEMVANDILPKSVSQS.

The protein belongs to the SsuD family.

The enzyme catalyses an alkanesulfonate + FMNH2 + O2 = an aldehyde + FMN + sulfite + H2O + 2 H(+). Catalyzes the desulfonation of aliphatic sulfonates. This is Alkanesulfonate monooxygenase from Pseudomonas entomophila (strain L48).